The sequence spans 253 residues: MRELKVVGLDADGKNIICQGAIPSEQFKLPVDDRLRAALRDDSVQPEQAQLDIEVTNVLSPKEIQARIRAGASVEQVAAASGSDIARIRRFAHPVLLERSRAAELATAAHPVLADGPAVLTMQETVAAALVARGLNPDSLTWDAWRNEDSRWTVQLAWKAGRSDNLAHFRFTPGAHGGTATAIDDTAHELINPTFNRPLRPLAPVAHLDFDEPEPAQPTLTVPSAQPVSNRRGKPAIPAWEDVLLGVRSGGRR.

A disordered region spans residues 211–235; that stretch reads DEPEPAQPTLTVPSAQPVSNRRGKP. Positions 218-229 are enriched in polar residues; that stretch reads PTLTVPSAQPVS.

This is an uncharacterized protein from Mycobacterium tuberculosis (strain CDC 1551 / Oshkosh).